The following is a 166-amino-acid chain: MKEKIPFYNEKEFNEMMKKTKKGTFSGWYIINPENKSVEFSGNFNRQFKLNKPVIPVNTEYVTRKEFNEYKDSNDQRLTKIENKVDKLEVKVDKLEEKVDKLEAKVDKLEEKVDKLEAKVDKLEEKVDKLEAKVDSGFEMLAKILAAINKRLDSIEGRLDKIEPPK.

Belongs to the UPF0134 family.

The polypeptide is UPF0134 protein MPN_138 (Mycoplasma pneumoniae (strain ATCC 29342 / M129 / Subtype 1) (Mycoplasmoides pneumoniae)).